The sequence spans 409 residues: Potassium channel subfamily K member 3 (409 aa).

At 1–8 (MKRQNVRT) the chain is on the cytoplasmic side. A helical transmembrane segment spans residues 9–29 (LALIVCTFTYLLVGAAVFDAL). Asparagine 53 carries N-linked (GlcNAc...) asparagine glycosylation. Positions 78–101 (WRFAGSFYFAITVITTIGYGHAAP) form an intramembrane region, pore-forming. The helical transmembrane segment at 108 to 128 (VFCMFYALLGIPLTLVMFQSL) threads the bilayer. The Cytoplasmic portion of the chain corresponds to 129–158 (GERINTFVRYLLHRAKRGLGMRHAEVSMAN). Residues 159–179 (MVLIGFVSCISTLCIGAAAFS) traverse the membrane as a helical segment. An intramembrane region (pore-forming) is located at residues 184 to 207 (WTFFQAYYYCFITLTTIGFGDYVA). Residues 223-243 (FSFVYILTGLTVIGAFLNLVV) traverse the membrane as a helical segment. Residues 244-409 (LRFMTMNAED…RGLMKRRSSV (166 aa)) are Cytoplasmic-facing.

It belongs to the two pore domain potassium channel (TC 1.A.1.8) family. Homodimer. Heterodimer with KCNK1. Heterodimer with KCNK9. Very strong expression in heart, also detected in kidney, brain, skin, testis, lung, skeletal muscle, small intestine and stomach. Not detected in liver, thymus or spleen. Expressed in adrenal glands mainly in zona glomerulosa and zona fasciculata of the cortex. Expressed at higher levels in brown and beige than in white adipocytes.

It localises to the cell membrane. It catalyses the reaction K(+)(in) = K(+)(out). The catalysed reaction is Na(+)(in) = Na(+)(out). Activated by halothane and isoflurane. Inhibited by external acidification, diacylglycerol and anandamide. Inactivated by barium. K(+) channel that conducts voltage-dependent outward rectifying currents upon membrane depolarization. Voltage sensing is coupled to K(+) electrochemical gradient in an 'ion flux gating' mode where outward but not inward ion flow opens the gate. Changes ion selectivity and becomes permeable to Na(+) ions in response to extracellular acidification. Protonation of the pH sensor His-98 stabilizes C-type inactivation conformation likely converting the channel from outward K(+)-conducting, to inward Na(+)-conducting to nonconductive state. Homo- and heterodimerizes to form functional channels with distinct regulatory and gating properties. Allows K(+) currents with fast-gating kinetics important for the repolarization and hyperpolarization phases of action potentials. In cerebellar granule cells, heteromeric KCNK3:KCNK9 channel may hyperpolarize the resting membrane potential to limit intrinsic neuronal excitability, but once the action potential threshold is reached, it may support high-frequency action potential firing and increased neuronal excitability. Dispensable for central chemosensory respiration i.e. breathing controlled by brainstem CO2/pH, it rather conducts pH-sensitive currents and controls the firing rate of serotonergic raphe neurons involved in potentiation of the respiratory chemoreflex. Additionally, imparts chemosensitivity to type 1 cells in carotid bodies which respond to a decrease in arterial oxygen pressure or an increase in carbon dioxide pressure or pH to initiate adaptive changes in pulmonary ventilation. In adrenal gland, contributes to the maintenance of a hyperpolarized resting membrane potential of aldosterone-producing cells at zona glomerulosa and limits aldosterone release as part of a regulatory mechanism that controls arterial blood pressure and electrolyte homeostasis. In brown adipocytes, mediates K(+) efflux that counteracts norepinephrine-induced membrane depolarization, limits Ca(2+) efflux and downstream cAMP and PKA signaling, ultimately attenuating lipid oxidation and adaptive thermogenesis. The polypeptide is Potassium channel subfamily K member 3 (Mus musculus (Mouse)).